The primary structure comprises 571 residues: Endonuclease/exonuclease/phosphatase family domain-containing protein 1 (571 aa).

The disordered stretch occupies residues 1 to 20; it reads MGSTLGCHRSIPRDPSDLSH. G2 is lipidated: N-myristoyl glycine. Basic and acidic residues predominate over residues 11–20; it reads IPRDPSDLSH. Residues S16, S21, and S25 each carry the phosphoserine modification. The HhH domain maps to 38-67; it reads ERLNINTATEEELMTLPGVTRAVARSIVEY. Phosphoserine occurs at positions 106, 110, 162, and 175. Residues 202 to 227 are disordered; sequence SRPPSTHTNGGLTFTAKPHPSPTSLS. Residues 204-213 are compositionally biased toward polar residues; sequence PPSTHTNGGL. Residue T267 is modified to Phosphothreonine. Position 430 is a phosphoserine (S430). A disordered region spans residues 548–571; it reads RKEGPRSGNGLTLERSEANIKHER. Positions 561–571 are enriched in basic and acidic residues; that stretch reads ERSEANIKHER.

This Bos taurus (Bovine) protein is Endonuclease/exonuclease/phosphatase family domain-containing protein 1 (EEPD1).